The primary structure comprises 261 residues: Cytochrome c oxidase subunit 3 (261 aa).

The Mitochondrial matrix portion of the chain corresponds to 1 to 15; the sequence is MAHQAHSYHMVDPSP. The chain crosses the membrane as a helical span at residues 16 to 34; sequence WPIFGAAAALLTTSGLIMW. Over 35–40 the chain is Mitochondrial intermembrane; sequence FHYSST. A helical transmembrane segment spans residues 41–66; sequence TLLTMGLLSMLLVMLQWWRDVVREST. Residues 67-72 are Mitochondrial matrix-facing; that stretch reads FQGHHT. A helical transmembrane segment spans residues 73–105; the sequence is PTVQKGLRYGMILFITSEAFFFLGFFWAFFHSS. Residues 106 to 128 lie on the Mitochondrial intermembrane side of the membrane; it reads LAPTPELGGQWPPTGVKPLNPLE. A helical membrane pass occupies residues 129 to 152; sequence VPLLNTAILLASGVTVTWAHHSIT. Topologically, residues 153 to 155 are mitochondrial matrix; sequence EGN. The helical transmembrane segment at 156–183 threads the bilayer; that stretch reads RKQAIHALTLTILLGFYFTALQAMEYHE. Over 184 to 190 the chain is Mitochondrial intermembrane; the sequence is ASFSIAD. A helical transmembrane segment spans residues 191 to 223; it reads SVYGSTFFVATGFHGLHVIIGSSFLTVCLLRLI. Topologically, residues 224 to 232 are mitochondrial matrix; the sequence is KFHFTPNHH. The chain crosses the membrane as a helical span at residues 233–256; sequence FGFEAAAWYWHFVDIIWLFLYMSM. Residues 257–261 lie on the Mitochondrial intermembrane side of the membrane; sequence YWWGS.

This sequence belongs to the cytochrome c oxidase subunit 3 family. As to quaternary structure, component of the cytochrome c oxidase (complex IV, CIV), a multisubunit enzyme composed of 14 subunits. The complex is composed of a catalytic core of 3 subunits MT-CO1, MT-CO2 and MT-CO3, encoded in the mitochondrial DNA, and 11 supernumerary subunits COX4I, COX5A, COX5B, COX6A, COX6B, COX6C, COX7A, COX7B, COX7C, COX8 and NDUFA4, which are encoded in the nuclear genome. The complex exists as a monomer or a dimer and forms supercomplexes (SCs) in the inner mitochondrial membrane with NADH-ubiquinone oxidoreductase (complex I, CI) and ubiquinol-cytochrome c oxidoreductase (cytochrome b-c1 complex, complex III, CIII), resulting in different assemblies (supercomplex SCI(1)III(2)IV(1) and megacomplex MCI(2)III(2)IV(2)).

The protein resides in the mitochondrion inner membrane. The catalysed reaction is 4 Fe(II)-[cytochrome c] + O2 + 8 H(+)(in) = 4 Fe(III)-[cytochrome c] + 2 H2O + 4 H(+)(out). Functionally, component of the cytochrome c oxidase, the last enzyme in the mitochondrial electron transport chain which drives oxidative phosphorylation. The respiratory chain contains 3 multisubunit complexes succinate dehydrogenase (complex II, CII), ubiquinol-cytochrome c oxidoreductase (cytochrome b-c1 complex, complex III, CIII) and cytochrome c oxidase (complex IV, CIV), that cooperate to transfer electrons derived from NADH and succinate to molecular oxygen, creating an electrochemical gradient over the inner membrane that drives transmembrane transport and the ATP synthase. Cytochrome c oxidase is the component of the respiratory chain that catalyzes the reduction of oxygen to water. Electrons originating from reduced cytochrome c in the intermembrane space (IMS) are transferred via the dinuclear copper A center (CU(A)) of subunit 2 and heme A of subunit 1 to the active site in subunit 1, a binuclear center (BNC) formed by heme A3 and copper B (CU(B)). The BNC reduces molecular oxygen to 2 water molecules using 4 electrons from cytochrome c in the IMS and 4 protons from the mitochondrial matrix. This is Cytochrome c oxidase subunit 3 (MT-CO3) from Gallus gallus (Chicken).